A 540-amino-acid polypeptide reads, in one-letter code: Sesquiterpene synthase 15b (540 aa).

D292, D296, and E445 together coordinate Mg(2+). Positions 292-296 (DDIYD) match the DDXXD motif motif.

The protein belongs to the terpene synthase family. Tpsa subfamily. Mg(2+) is required as a cofactor. Mn(2+) serves as cofactor.

It carries out the reaction (2E,6E)-farnesyl diphosphate = germacrene A + diphosphate. It participates in secondary metabolite biosynthesis; terpenoid biosynthesis. Its function is as follows. Sesquiterpene synthase involved in the biosynthesis of volatile compounds. Mediates the conversion of (2E,6E)-farnesyl diphosphate (FPP) into germacrene A. The polypeptide is Sesquiterpene synthase 15b (Solanum habrochaites (Wild tomato)).